We begin with the raw amino-acid sequence, 307 residues long: Nuclear polyadenylated RNA-binding protein nab2 (307 aa).

The tract at residues 102–135 is disordered; it reads STDKSQQSFSVPETSIQPQSSQTPNITSLREEKE. The span at 105 to 129 shows a compositional bias: polar residues; sequence KSQQSFSVPETSIQPQSSQTPNITS. 3 consecutive C3H1-type zinc fingers follow at residues 178-202, 217-232, and 254-268; these read TQEVPLCKYADKCSRANCIFAHPTP, CASGKECKAADCVKGH, and CKYKPCLNPACRFIH. Positions 274 to 307 are disordered; that stretch reads NMTWRPPSKTEETSLSERSFAVNESEEQLHVPSV.

This sequence belongs to the ZC3H14 family.

The protein localises to the nucleus. Its function is as follows. RNA-binding protein involved in RNA processing. Acts as a regulator of mRNA stability: binds to mRNAs and pre-mRNAs, preventing their degradation. Involved in the biogenesis of circular RNAs (circRNAs) which are produced by back-splicing circularization of pre-mRNAs. This chain is Nuclear polyadenylated RNA-binding protein nab2, found in Schizosaccharomyces pombe (strain 972 / ATCC 24843) (Fission yeast).